Reading from the N-terminus, the 218-residue chain is MEMALPRKYDRVTGRILTHKNNQMCTTECSQMYNLHNPITFELGLGNVFVCMRCLTVHHCDMQTDCTIVNTHEGYVCAKTGLFYSGWMPTYADCFLEPICEPNIETVNVVVVLLSYVYSFLMENKERYAAIIDSIIKDGKFIKNVEDAVFYTFNAVFTNSTFNKIPLTTISRLFVQLIIGGHAKGTIYDSNVIRVSRRKREDSLLKKMRLEYGNALIL.

Belongs to the herpesviridae UL92 family.

The protein is Protein U63 (U63) of Homo sapiens (Human).